The sequence spans 194 residues: Der GTPase-activating protein YihI (194 aa).

Positions 1-87 (MSRQKKSRNI…RDPRLGSRKK (87 aa)) are disordered. Basic and acidic residues predominate over residues 37 to 48 (TRYELDAKARED).

It belongs to the YihI family. In terms of assembly, interacts with Der.

A GTPase-activating protein (GAP) that modifies Der/EngA GTPase function. May play a role in ribosome biogenesis. This is Der GTPase-activating protein YihI from Mannheimia succiniciproducens (strain KCTC 0769BP / MBEL55E).